Consider the following 355-residue polypeptide: Trans-enoyl reductase (355 aa).

NADP(+) is bound at residue 45 to 48; sequence VDTK. A substrate-binding site is contributed by 131-138; it reads ISFMTTGL. Residues 166–169, 189–192, Y207, and 254–255 contribute to the NADP(+) site; these read SSAT, SPRN, and LE. 275-279 contacts substrate; it reads GPQML. An NADP(+)-binding site is contributed by 344–345; it reads IS.

Belongs to the zinc-containing alcohol dehydrogenase family. Monomer.

The catalysed reaction is L-serine + 7 malonyl-CoA + acetyl-CoA + 2 S-adenosyl-L-methionine + ATP + 8 NADPH + 11 H(+) = (5S)-3-[(2E,6R,8E,10E,12E)-2,6-dimethyltetradeca-2,8,10,12-tetraenoyl]-5-(hydroxymethyl)pyrrolidine-2,4-dione + AMP + 2 S-adenosyl-L-homocysteine + 7 CO2 + diphosphate + 8 NADP(+) + 8 CoA + 6 H2O. It participates in mycotoxin biosynthesis. Functionally, hybrid PKS-NRPS synthetase; part of the gene cluster that mediates the biosynthesis of trichosetin, a trans-fused decalin-containing tetramic acid with antimicrobial activity. The PKS module of PKS-NRPS1 together with the enoylreductase (ER) catalyze the formation of the polyketide unit which is then conjugated to L-serine by the condensation domain of the PKS-NRPS1 NRPS module. Activity of the Dieckmann cyclase domain (RED) results in release of the Dieckmann product intermediate. Diels-Alderase (DA) is involved in endo-selective Diels-Alder cycloaddition to form the decalin ring, leading to the production of N-desmethylequisetin also called trichosetin. The cluster does not contain the equisetin N-methyltransferase and consequently, trichosetin is isolated as final product. The protein is Trans-enoyl reductase of Gibberella fujikuroi (strain CBS 195.34 / IMI 58289 / NRRL A-6831) (Bakanae and foot rot disease fungus).